A 437-amino-acid chain; its full sequence is MRIASSSGILMDANGKANGSAPSALVAYFLGMGFSREMVFRAIKEIGNDNNNTFPHLLQLLPFLSGDTDSEQILELLLTYQILEEEDEEEDVNWDEDDTVDNFDRATYSDGSGDEDFLQEMSEKDEKIKSLVSMGFPEDEAMRAITRCGLDASVDLLVESIYAPASAGNVYFTNLSDYEDTEFSSFGGRKKTKLIDGTKKKRERYRSRPQWNQVPFDGSHEEPMPLPNPMVGFSLPNDGLRSVHRNLPDHALGPPFFYYENVALAPKGVWTTISRFLYDIYPEFVDSKYFCAAARKRGYIHNLPIENRSPVLPIPPKTISEAFPSTKMWWPSWDPRRQFNCLQTYVASAKHTERIRCALGRFGDALPPAVQKSVLEECRKWNLVWVGKNKVATLEPDEMEFLLGYPRNHTRGVSRKRDIELLGIHSKLIQLHTTSLC.

2 consecutive UBA domains span residues 20-60 (SAPS…LLQL) and 120-164 (EMSE…IYAP). One can recognise an SAM-dependent MTase DRM-type domain in the interval 243-437 (VHRNLPDHAL…LIQLHTTSLC (195 aa)).

The protein belongs to the class I-like SAM-binding methyltransferase superfamily. DRM-methyltransferase family.

The protein localises to the nucleus. Functionally, involved in de novo DNA methylation. Involved in RNA-directed DNA methylation (RdDM). This is Probable inactive DNA (cytosine-5)-methyltransferase DRM1B from Oryza sativa subsp. japonica (Rice).